The sequence spans 485 residues: E3 ubiquitin-protein ligase RNF14 (485 aa).

An RWD domain is found at Asp-11 to Tyr-137. Positions Arg-37–Asn-45 match the D-box motif. A TRIAD supradomain region spans residues Lys-217–Leu-458. Zn(2+) is bound by residues Cys-221, Cys-224, Cys-239, His-241, Cys-244, Cys-247, Cys-266, Cys-271, Cys-310, Cys-315, Cys-330, Cys-333, Cys-338, Cys-341, and His-346. The segment at Cys-221–Cys-271 adopts an RING-type 1 zinc-finger fold. The segment at Ala-290–Cys-351 adopts an IBR-type zinc-finger fold. Ser-349 is modified (phosphoserine). Residues Cys-351, Cys-405, and Cys-408 each contribute to the Zn(2+) site. The RING-type 2; atypical zinc finger occupies Cys-405 to Cys-434. Residue Cys-418 is part of the active site. Zn(2+)-binding residues include Cys-423, Cys-426, Cys-431, Cys-434, His-446, and Cys-454.

The protein belongs to the RBR family. RNF14 subfamily. In terms of assembly, interacts with GCN1; interaction takes place in response to ribosome collisions and is required for ubiquitination of EEF1A1/eEF1A. Interacts with the ubiquitin-conjugating enzymes UBE2E1 and UBE2E2. Interacts with AR/androgen receptor. Interacts with TCF7/TCF1, TCF7L1/TCF3 and TCF7L2/TCF4; promoting Wnt signaling. Post-translationally, RING-type zinc finger-dependent and UBE2E2-dependent autoubiquitination.

It localises to the cytoplasm. The protein resides in the nucleus. It catalyses the reaction [E2 ubiquitin-conjugating enzyme]-S-ubiquitinyl-L-cysteine + [acceptor protein]-L-lysine = [E2 ubiquitin-conjugating enzyme]-L-cysteine + [acceptor protein]-N(6)-ubiquitinyl-L-lysine.. It functions in the pathway protein modification; protein ubiquitination. Functionally, E3 ubiquitin-protein ligase that plays a key role in the RNF14-RNF25 translation quality control pathway, a pathway that takes place when a ribosome has stalled during translation, and which promotes ubiquitination and degradation of translation factors on stalled ribosomes. Recruited to stalled ribosomes by the ribosome collision sensor GCN1 and mediates 'Lys-6'-linked ubiquitination of target proteins, leading to their degradation. Mediates ubiquitination of EEF1A1/eEF1A and ETF1/eRF1 translation factors on stalled ribosomes, leading to their degradation. Also catalyzes ubiquitination of ribosomal proteins RPL0, RPL1, RPL12, RPS13 and RPS17. Specifically required to resolve RNA-protein cross-links caused by reactive aldehydes, which trigger translation stress by stalling ribosomes: acts by catalying 'Lys-6'-linked ubiquitination of RNA-protein cross-links, leading to their removal by the ATP-dependent unfoldase VCP and subsequent degradation by the proteasome. Independently of its function in the response to stalled ribosomes, acts as a regulator of transcription in Wnt signaling via its interaction with TCF transcription factors (TCF7/TCF1, TCF7L1/TCF3 and TCF7L2/TCF4). May also play a role as a coactivator for androgen- and, to a lesser extent, progesterone-dependent transcription. The sequence is that of E3 ubiquitin-protein ligase RNF14 from Mus musculus (Mouse).